A 686-amino-acid chain; its full sequence is Translation initiation factor IF-2 (686 aa).

The tract at residues M35–R99 is disordered. Positions L50–K68 are enriched in basic and acidic residues. Positions D69–M79 are enriched in basic residues. Positions E87–R99 are enriched in basic and acidic residues. The 170-residue stretch at L186 to K355 folds into the tr-type G domain. The segment at G195–T202 is G1. G195 to T202 contacts GTP. The G2 stretch occupies residues G220–H224. The segment at D241–G244 is G3. GTP is bound by residues D241–H245 and N295–D298. The segment at N295–D298 is G4. Residues S331 to L333 form a G5 region.

It belongs to the TRAFAC class translation factor GTPase superfamily. Classic translation factor GTPase family. IF-2 subfamily.

The protein resides in the cytoplasm. Functionally, one of the essential components for the initiation of protein synthesis. Protects formylmethionyl-tRNA from spontaneous hydrolysis and promotes its binding to the 30S ribosomal subunits. Also involved in the hydrolysis of GTP during the formation of the 70S ribosomal complex. This chain is Translation initiation factor IF-2, found in Halothermothrix orenii (strain H 168 / OCM 544 / DSM 9562).